A 594-amino-acid polypeptide reads, in one-letter code: Elongation factor 4 (594 aa).

One can recognise a tr-type G domain in the interval 2-184 (KNIRNFSIIA…TIVAKVPAPE (183 aa)). GTP contacts are provided by residues 14-19 (DHGKST) and 131-134 (NKID).

The protein belongs to the TRAFAC class translation factor GTPase superfamily. Classic translation factor GTPase family. LepA subfamily.

The protein localises to the cell inner membrane. It carries out the reaction GTP + H2O = GDP + phosphate + H(+). Functionally, required for accurate and efficient protein synthesis under certain stress conditions. May act as a fidelity factor of the translation reaction, by catalyzing a one-codon backward translocation of tRNAs on improperly translocated ribosomes. Back-translocation proceeds from a post-translocation (POST) complex to a pre-translocation (PRE) complex, thus giving elongation factor G a second chance to translocate the tRNAs correctly. Binds to ribosomes in a GTP-dependent manner. In Francisella tularensis subsp. tularensis (strain WY96-3418), this protein is Elongation factor 4.